Reading from the N-terminus, the 221-residue chain is MRLILLGAPGAGKGTQAKFICEKFGIPQISTGDMLRAAVKAGTPLGIEAKKVMDAGGLVSDDIIIGLVKDRLKQPDCEKGYLFDGFPRTIPQAEAMKEAGVAIDYVLEIDVPFDAIIERMSGRRVHVASGRTYHVKFNPPKADMVDDETGEALIQRDDDKEETVRKRLDVYSQQTRPLVDYYSNWAANGDASAKVSPPKYRKIAGLGEVDKITASVFDALK.

Residue 10–15 (GAGKGT) participates in ATP binding. The interval 30-59 (STGDMLRAAVKAGTPLGIEAKKVMDAGGLV) is NMP. AMP-binding positions include Thr-31, Arg-36, 57–59 (GLV), 85–88 (GFPR), and Gln-92. The segment at 122-159 (GRRVHVASGRTYHVKFNPPKADMVDDETGEALIQRDDD) is LID. ATP-binding positions include Arg-123 and 132 to 133 (TY). AMP-binding residues include Arg-156 and Arg-167. Gly-207 provides a ligand contact to ATP.

This sequence belongs to the adenylate kinase family. As to quaternary structure, monomer.

Its subcellular location is the cytoplasm. It carries out the reaction AMP + ATP = 2 ADP. Its pathway is purine metabolism; AMP biosynthesis via salvage pathway; AMP from ADP: step 1/1. In terms of biological role, catalyzes the reversible transfer of the terminal phosphate group between ATP and AMP. Plays an important role in cellular energy homeostasis and in adenine nucleotide metabolism. This chain is Adenylate kinase, found in Cupriavidus metallidurans (strain ATCC 43123 / DSM 2839 / NBRC 102507 / CH34) (Ralstonia metallidurans).